The primary structure comprises 104 residues: Toxin-like protein 14 (104 aa).

The N-terminal stretch at 1-25 (MNTYNARLYIFSLALALVILKGTKC) is a signal peptide.

In terms of processing, contains 4 disulfide bonds. In terms of tissue distribution, expressed by the venom gland.

It localises to the secreted. This is Toxin-like protein 14 from Urodacus yaschenkoi (Inland robust scorpion).